Consider the following 165-residue polypeptide: Phosphopantetheine adenylyltransferase (165 aa).

Residue Thr-10 coordinates substrate. ATP-binding positions include 10 to 11 (TF) and His-18. Lys-42, Leu-75, and Arg-89 together coordinate substrate. ATP is bound by residues 90-92 (GVR), Glu-100, and 125-131 (YTYVAST).

The protein belongs to the bacterial CoaD family. In terms of assembly, homohexamer. The cofactor is Mg(2+).

The protein resides in the cytoplasm. It carries out the reaction (R)-4'-phosphopantetheine + ATP + H(+) = 3'-dephospho-CoA + diphosphate. The protein operates within cofactor biosynthesis; coenzyme A biosynthesis; CoA from (R)-pantothenate: step 4/5. Its function is as follows. Reversibly transfers an adenylyl group from ATP to 4'-phosphopantetheine, yielding dephospho-CoA (dPCoA) and pyrophosphate. This chain is Phosphopantetheine adenylyltransferase, found in Chlorobaculum tepidum (strain ATCC 49652 / DSM 12025 / NBRC 103806 / TLS) (Chlorobium tepidum).